A 36-amino-acid chain; its full sequence is Mating hormone A-factor 1 (36 aa).

A propeptide spanning residues 1 to 21 is cleaved from the precursor; that stretch reads MQPSTATAAPKEKTSSEKKDN. Cys33 is modified (cysteine methyl ester). Residue Cys33 is the site of S-farnesyl cysteine attachment. Residues 34–36 constitute a propeptide, removed in mature form; that stretch reads VIA.

The protein resides in the cell membrane. The active factor is excreted into the culture medium by haploid cells of the A mating type and acts on cells of the opposite mating type (type alpha). It mediates the conjugation process between the two types by inhibiting the initiation of DNA synthesis in type alpha cells and synchronizing them with type A. The polypeptide is Mating hormone A-factor 1 (MFA1) (Saccharomyces cerevisiae (strain ATCC 204508 / S288c) (Baker's yeast)).